The following is a 192-amino-acid chain: Interferon epsilon (192 aa).

The signal sequence occupies residues methionine 1 to serine 21. A disulfide bridge connects residues cysteine 52 and cysteine 162.

It belongs to the alpha/beta interferon family. In terms of tissue distribution, expressed at very high levels in uterus and, at much lower levels, in ovary and cervix. Very low levels, if any, in other organs. In the endometrium, expressed in the luminal and glandular epithelial cells (at protein level).

The protein localises to the secreted. In terms of biological role, type I interferon required for maintaining basal levels of IFN-regulated genes, including 2'-5'-oligoadenylate synthetase, IRF7 and ISG15, in the female reproductive tract. Directly mediates protection against viral, including HSV-2, and bacterial, including Chlamydia muridarum, genital infections. This Mus musculus (Mouse) protein is Interferon epsilon (Ifne).